A 256-amino-acid chain; its full sequence is Putative transcription factor 001R (256 aa).

Its function is as follows. Transcription activation. The sequence is that of Putative transcription factor 001R from Frog virus 3 (isolate Goorha) (FV-3).